Consider the following 134-residue polypeptide: Small ribosomal subunit protein uS11 (134 aa).

The segment at 1 to 24 (MATKMAGVKRAGRKRKERKNIERG) is disordered.

This sequence belongs to the universal ribosomal protein uS11 family. As to quaternary structure, part of the 30S ribosomal subunit. Interacts with proteins S7 and S18. Binds to IF-3.

Its function is as follows. Located on the platform of the 30S subunit, it bridges several disparate RNA helices of the 16S rRNA. Forms part of the Shine-Dalgarno cleft in the 70S ribosome. The sequence is that of Small ribosomal subunit protein uS11 from Acetivibrio thermocellus (strain ATCC 27405 / DSM 1237 / JCM 9322 / NBRC 103400 / NCIMB 10682 / NRRL B-4536 / VPI 7372) (Clostridium thermocellum).